Here is a 363-residue protein sequence, read N- to C-terminus: uncharacterized protein (363 aa).

Positions 198, 225, 246, and 291 each coordinate S-adenosyl-L-methionine. C318 serves as the catalytic Nucleophile.

Belongs to the class I-like SAM-binding methyltransferase superfamily. RNA M5U methyltransferase family.

This is an uncharacterized protein from Mycoplasma mobile (strain ATCC 43663 / 163K / NCTC 11711) (Mesomycoplasma mobile).